Consider the following 336-residue polypeptide: Probable magnesium transporter NIPA2 (336 aa).

Residues 1-7 (MEEMSPD) lie on the Extracellular side of the membrane. The helical transmembrane segment at 8-28 (NIHGVILAVSSSIFIGSSFII) threads the bilayer. At 29–55 (KKKGLKKAGVSGARAGEGGYGYLYEPW) the chain is on the cytoplasmic side. The chain crosses the membrane as a helical span at residues 56–76 (WWAGMITMIVGEIANFAAYAF). Residues 77–79 (APA) are Extracellular-facing. A helical transmembrane segment spans residues 80-100 (ILVTPLGALSIIFSAVLAHFI). The Cytoplasmic portion of the chain corresponds to 101 to 104 (LEEK). Residues 105–125 (LHMFGILGCVLCVVGSTTIVL) form a helical membrane-spanning segment. At 126 to 145 (HAPHEQGIESVKQVWHLATE) the chain is on the extracellular side. A helical transmembrane segment spans residues 146-166 (PGFLAYSAVVLVVVLALIFYY). At 167–179 (EPRYGKTHMIVYV) the chain is on the cytoplasmic side. The helical transmembrane segment at 180–200 (GICSLMGSLTVMSVKAVAIAI) threads the bilayer. The Extracellular segment spans residues 201–212 (KLTFSGMNQFKY). The chain crosses the membrane as a helical span at residues 213–233 (FHAWIFIIVVTICCILQINYL). Topologically, residues 234–244 (NKALDNFNTAV) are cytoplasmic. The chain crosses the membrane as a helical span at residues 245–265 (ISPVYYVMFTTFTILASMIMF). At 266-272 (KDWASQS) the chain is on the extracellular side. The helical transmembrane segment at 273 to 293 (GLQIATELCGFVTILSGTFLL) threads the bilayer. The Cytoplasmic segment spans residues 294-336 (HKTKDMGNSTSLRGSTSHSPRDTPVFINSGSSRSSNSTRPAIL). Positions 303–336 (TSLRGSTSHSPRDTPVFINSGSSRSSNSTRPAIL) are disordered. Residues 321–330 (NSGSSRSSNS) show a composition bias toward low complexity.

The protein belongs to the NIPA (TC 2.A.7) family. Homodimer.

It is found in the cell membrane. It localises to the early endosome. Functionally, acts as a Mg(2+) transporter. Can also transport other divalent cations such as Fe(2+), Sr(2+), Ba(2+), Mn(2+) and Co(2+) but to a much less extent than Mg(2+). This is Probable magnesium transporter NIPA2 from Arabidopsis thaliana (Mouse-ear cress).